Here is a 531-residue protein sequence, read N- to C-terminus: T-complex protein 1 subunit zeta (531 aa).

Position 2 is an N-acetylalanine (Ala2). Lys5 bears the N6-acetyllysine mark. Gly39 serves as a coordination point for ADP. Gly39 contributes to the ATP binding site. Asp90 is a Mg(2+) binding site. Residues Gly91, Thr92, Thr93, Ser94, Thr158, and Lys159 each contribute to the ADP site. The ATP site is built by Gly91, Thr92, and Thr93. Lys199 carries the post-translational modification N6-acetyllysine. At Ser205 the chain carries Phosphoserine. Lys251 is covalently cross-linked (Glycyl lysine isopeptide (Lys-Gly) (interchain with G-Cter in SUMO2)). N6-acetyllysine is present on residues Lys287, Lys365, Lys377, and Lys388. Residue Ala411 coordinates ADP. Positions 411, 412, 496, and 501 each coordinate ATP. ADP is bound at residue Asp496.

It belongs to the TCP-1 chaperonin family. As to quaternary structure, component of the chaperonin-containing T-complex (TRiC), a hexadecamer composed of two identical back-to-back stacked rings enclosing a protein folding chamber. Each ring is made up of eight different subunits: TCP1/CCT1, CCT2, CCT3, CCT4, CCT5, CCT6A/CCT6, CCT7, CCT8. Interacts with PACRG.

The protein resides in the cytoplasm. The catalysed reaction is ATP + H2O = ADP + phosphate + H(+). In terms of biological role, component of the chaperonin-containing T-complex (TRiC), a molecular chaperone complex that assists the folding of actin, tubulin and other proteins upon ATP hydrolysis. The TRiC complex mediates the folding of WRAP53/TCAB1, thereby regulating telomere maintenance. In Pongo abelii (Sumatran orangutan), this protein is T-complex protein 1 subunit zeta (CCT6).